The chain runs to 164 residues: V-type proton ATPase 16 kDa proteolipid subunit (164 aa).

The Lumenal segment spans residues 1-9; sequence MASFSGDET. Residues 10-32 traverse the membrane as a helical segment; the sequence is APFFGFLGAAAALVFSCMGAAYG. The Cytoplasmic segment spans residues 33-54; sequence TAKSGVGVASMGVMRPELVMKS. The chain crosses the membrane as a helical span at residues 55 to 75; that stretch reads IVPVVMAGVLGIYGLIIAVII. The Lumenal segment spans residues 76–94; the sequence is STGINPKAKSYYLFDGYAH. The chain crosses the membrane as a helical span at residues 95–116; that stretch reads LSSGLACGLAGLSAGMAIGIVG. Topologically, residues 117–128 are cytoplasmic; that stretch reads DAGVRANAQQPK. The chain crosses the membrane as a helical span at residues 129–154; that stretch reads LFVGMILILIFAEALALYGLIVGIIL. At 155–164 the chain is on the lumenal side; the sequence is SSRAGQSRAD.

It belongs to the V-ATPase proteolipid subunit family. V-ATPase is a heteromultimeric enzyme composed of a peripheral catalytic V1 complex (main components: subunits A, B, C, D, E, and F) attached to an integral membrane V0 proton pore complex (main component: the proteolipid protein; which is present as a hexamer that forms the proton-conducting pore).

It is found in the vacuole membrane. Proton-conducting pore forming subunit of the membrane integral V0 complex of vacuolar ATPase. V-ATPase is responsible for acidifying a variety of intracellular compartments in eukaryotic cells. This Vigna radiata var. radiata (Mung bean) protein is V-type proton ATPase 16 kDa proteolipid subunit.